A 297-amino-acid chain; its full sequence is Transcription factor MYB1R1 (297 aa).

A disordered region spans residues 44-96; sequence DLSQYEHPNANNNNNGGDNNESSKVAQDEGYASADDAVQHQSNSGRERKRGVP. The span at 52–63 shows a compositional bias: low complexity; it reads NANNNNNGGDNN. An HTH myb-type domain is found at 89–145; that stretch reads RERKRGVPWTEEEHKLFLLGLQKVGKGDWRGISRNFVKTRTPTQVASHAQKYFLRRS. The segment at residues 117–141 is a DNA-binding region (H-T-H motif); sequence WRGISRNFVKTRTPTQVASHAQKYF.

It is found in the nucleus. It localises to the cytoplasm. The protein localises to the cytosol. In terms of biological role, binds selectively to the DNA sequence 5'-[GA]GATAA-3' and may act as a transcription factor involved in the regulation of drought-responsive genes. Enhances stomatal closure in response to abscisic acid (ABA). Confers drought and salt tolerance. The polypeptide is Transcription factor MYB1R1 (Solanum tuberosum (Potato)).